The following is a 119-amino-acid chain: uncharacterized protein (119 aa).

It to Synechocystis PCC 6803 slr0903.

This is an uncharacterized protein from Methanocaldococcus jannaschii (strain ATCC 43067 / DSM 2661 / JAL-1 / JCM 10045 / NBRC 100440) (Methanococcus jannaschii).